A 225-amino-acid chain; its full sequence is Thymidylate kinase (225 aa).

10–17 (GPEGAGKT) lines the ATP pocket.

This sequence belongs to the thymidylate kinase family.

The enzyme catalyses dTMP + ATP = dTDP + ADP. Functionally, phosphorylation of dTMP to form dTDP in both de novo and salvage pathways of dTTP synthesis. The chain is Thymidylate kinase from Geobacillus thermodenitrificans (strain NG80-2).